We begin with the raw amino-acid sequence, 377 residues long: Homoserine O-acetyltransferase (377 aa).

An AB hydrolase-1 domain is found at 48-347 (NVVLIEHALT…PVGHDAFLTE (300 aa)). Residue S143 is the Nucleophile of the active site. R213 contacts substrate. Residues D311 and H341 contribute to the active site. D342 contributes to the substrate binding site.

The protein belongs to the AB hydrolase superfamily. MetX family. As to quaternary structure, homodimer.

The protein localises to the cytoplasm. The catalysed reaction is L-homoserine + acetyl-CoA = O-acetyl-L-homoserine + CoA. It participates in amino-acid biosynthesis; L-methionine biosynthesis via de novo pathway; O-acetyl-L-homoserine from L-homoserine: step 1/1. Transfers an acetyl group from acetyl-CoA to L-homoserine, forming acetyl-L-homoserine. The protein is Homoserine O-acetyltransferase of Corynebacterium efficiens (strain DSM 44549 / YS-314 / AJ 12310 / JCM 11189 / NBRC 100395).